A 256-amino-acid chain; its full sequence is Triosephosphate isomerase (256 aa).

Substrate is bound at residue 9–11 (NWK). The active-site Electrophile is the His-95. Glu-167 serves as the catalytic Proton acceptor. Residues Gly-173, Ser-213, and 234–235 (GG) contribute to the substrate site.

It belongs to the triosephosphate isomerase family. Homodimer.

It is found in the cytoplasm. The enzyme catalyses D-glyceraldehyde 3-phosphate = dihydroxyacetone phosphate. Its pathway is carbohydrate biosynthesis; gluconeogenesis. It participates in carbohydrate degradation; glycolysis; D-glyceraldehyde 3-phosphate from glycerone phosphate: step 1/1. In terms of biological role, involved in the gluconeogenesis. Catalyzes stereospecifically the conversion of dihydroxyacetone phosphate (DHAP) to D-glyceraldehyde-3-phosphate (G3P). The sequence is that of Triosephosphate isomerase from Symbiobacterium thermophilum (strain DSM 24528 / JCM 14929 / IAM 14863 / T).